A 177-amino-acid polypeptide reads, in one-letter code: Large ribosomal subunit protein bL19 (177 aa).

The protein belongs to the bacterial ribosomal protein bL19 family.

This protein is located at the 30S-50S ribosomal subunit interface and may play a role in the structure and function of the aminoacyl-tRNA binding site. In Sinorhizobium medicae (strain WSM419) (Ensifer medicae), this protein is Large ribosomal subunit protein bL19.